We begin with the raw amino-acid sequence, 416 residues long: Tyrosine aminotransferase (416 aa).

Lysine 253 bears the N6-(pyridoxal phosphate)lysine mark.

The protein belongs to the class-I pyridoxal-phosphate-dependent aminotransferase family. In terms of assembly, homodimer. Requires pyridoxal 5'-phosphate as cofactor. In terms of processing, the N-terminus is blocked.

Its subcellular location is the cytoplasm. The protein resides in the mitochondrion. It carries out the reaction L-tyrosine + 2-oxoglutarate = 3-(4-hydroxyphenyl)pyruvate + L-glutamate. Its pathway is amino-acid degradation; L-phenylalanine degradation; acetoacetate and fumarate from L-phenylalanine: step 2/6. Its function is as follows. Transaminase involved in tyrosine breakdown. Converts tyrosine to p-hydroxyphenylpyruvate. The chain is Tyrosine aminotransferase from Trypanosoma cruzi.